We begin with the raw amino-acid sequence, 162 residues long: Large ribosomal subunit protein uL30 (162 aa).

It belongs to the universal ribosomal protein uL30 family. As to quaternary structure, part of the 50S ribosomal subunit.

This Desulfurococcus amylolyticus (strain DSM 18924 / JCM 16383 / VKM B-2413 / 1221n) (Desulfurococcus kamchatkensis) protein is Large ribosomal subunit protein uL30.